The following is a 933-amino-acid chain: MASLPLCGSVRSPEGLPGDPSSQEDRQDYDPEDPVSGSGSYSPTSTDSNDLEPEWLDSVQKNGELFYLELSEDEEESLLPETPTVNHVRFSENEIIIEEDDYREGKKYEPKLKRFTKILKSKKLLPKRYNKKNSNASGPVSILKHQSNQKMGVIVQQRHKDVNIYVNPKKLTVTKAKEQLKLLEVLVGIIHQTKWSWRRTGKQGGGERLVVHGLLPGGSAMKSGQVLIGDVLVAVNDVEVTSENIERVLSCIPGPMQVKLTFENAYAMKKETTQPRQKKAQLNTSDLVKLLWGEEVEGIQQNILNTPHIVMYLTLQLDSETSKEEQEILYHYPVSEASQKLQSVRGIFLTLCDMLENVTGTQVTSSSLLLNRKQIHIAYWKETDKLLLIGLPAEEVPLPQLRNMIEDVAQTLKFMYGSLDSAFCQVENVPRLDHFFSLFFQRALQPTKLHSSASPSTQQYDASSAVLLDNLPGVRWLTLPQEIKLELDTALSDLEAADFAELSEDYYDMRRLYTILGSSLFYKGYLICSHLPKDDLIDIAVYCRHYCLLPLAAKQRIGQLVIWREVFPRHHLQPSADSNTEVFQEPEGRYFLLIVGLRHYMLCVLLEAGGCASRAIGNPGPDCIYVDQVKTTLHQLEGVDSRINERLASSPTPCLSCADWFLAGSHEKLDNLTTSPILSRLHGASRVATSPTCRRTLFSDYSLKTRKPSPSRSGGPDSGLEGEGVGLSPHTTESQGSHGSEETGALLKVTKKKSALPNPFHLGNLKKDLSEKELDIYNTVKLTSGPENTLFHYVALETVQGIFITPTHEEVAQLSGSIHPQLIKNFHQCCLSIRAVFQQTVAKEKKKALNGKDHSGSTNSVSSLNPVKEHGVLFECSPENWTDQRKAPPVMAYWVVGRLFLHPKLQELYVCFHDSVTEIAIEMAFKLFFGLTL.

The tract at residues 1 to 54 (MASLPLCGSVRSPEGLPGDPSSQEDRQDYDPEDPVSGSGSYSPTSTDSNDLEPE) is disordered. Polar residues predominate over residues 37–48 (GSGSYSPTSTDS). The region spanning 186 to 264 (LVGIIHQTKW…PMQVKLTFEN (79 aa)) is the PDZ domain. Serine 675 is subject to Phosphoserine. The interval 703 to 742 (LKTRKPSPSRSGGPDSGLEGEGVGLSPHTTESQGSHGSEE) is disordered. Positions 710-719 (PSRSGGPDSG) are enriched in low complexity. The segment covering 729 to 738 (PHTTESQGSH) has biased composition (polar residues).

This sequence belongs to the inturned family. Component of the CPLANE (ciliogenesis and planar polarity effectors) complex, composed of INTU, FUZ and WDPCP. Interacts with CPLANE1. Interacts with NPHP4 and DAAM1; INTU is mediating the interaction between NPHP4 and DAAM1.

It localises to the cytoplasm. The protein localises to the cell surface. Its subcellular location is the cytoskeleton. It is found in the cilium basal body. The protein resides in the microtubule organizing center. It localises to the centrosome. The protein localises to the centriole. Plays a key role in ciliogenesis and embryonic development. Regulator of cilia formation by controlling the organization of the apical actin cytoskeleton and the positioning of the basal bodies at the apical cell surface, which in turn is essential for the normal orientation of elongating ciliary microtubules. Plays a key role in definition of cell polarity via its role in ciliogenesis but not via conversion extension. Has an indirect effect on hedgehog signaling. Proposed to function as core component of the CPLANE (ciliogenesis and planar polarity effectors) complex involved in the recruitment of peripheral IFT-A proteins to basal bodies. Required for recruitment of CPLANE2 to the mother centriole. Binds phosphatidylinositol 3-phosphate with highest affinity, followed by phosphatidylinositol 4-phosphate and phosphatidylinositol 5-phosphate. This chain is Protein inturned (INTU), found in Bos taurus (Bovine).